Here is a 290-residue protein sequence, read N- to C-terminus: Translin-associated protein X (290 aa).

The tract at residues M1–L31 is disordered. Over residues D16 to D28 the composition is skewed to basic and acidic residues. An interaction with C1D region spans residues L73 to N208. Positions 129 and 197 each coordinate Mg(2+). K279 is covalently cross-linked (Glycyl lysine isopeptide (Lys-Gly) (interchain with G-Cter in SUMO2)).

It belongs to the translin family. Ring-shaped heterooctamer of six TSN and two TSNAX subunits. Interacts with GOLGA3, TSNAXIP1, SUN1 and AKAP9. Interacts with the homodimeric form of C1D following gamma-radiation. Interacts with TSN and C1D in a mutually exclusive manner. Post-translationally, sumoylated with SUMO1. Detected in heart, brain, lung, liver, kidney and testis.

The protein resides in the cytoplasm. It is found in the perinuclear region. Its subcellular location is the golgi apparatus. It localises to the nucleus. Acts in combination with TSN as an endonuclease involved in the activation of the RNA-induced silencing complex (RISC). Possible role in spermatogenesis. The sequence is that of Translin-associated protein X (Tsnax) from Mus musculus (Mouse).